The primary structure comprises 269 residues: Transcription factor MYB7 (269 aa).

2 HTH myb-type domains span residues Lys-9–Leu-61 and Arg-62–Leu-116. 2 consecutive DNA-binding regions (H-T-H motif) follow at residues Trp-37 to Leu-61 and Trp-89 to Ile-112.

In terms of assembly, interacts with SAD2. Expressed in anthers. Expressed in pollen grains and mature seeds. Expressed in roots and vasculature of leaves.

The protein localises to the nucleus. Its function is as follows. Transcription factor involved in the negative regulation of flavonol biosynthesis. Represses the early phenylpropanoid genes, phenylalanine ammonia-lyase (PAL), cinnamate 4-hydroxylase (C4H) and 4-coumarate-CoA ligase (4CL), as well as the flavonoid-specific genes, flavonoid 3'-hydroxylase (F3'H) and dihydroflavonol 4-reductase (DFR). Plays a role in seed germination inhibition. Negatively regulates the expression of the abscisic acid (ABA) signaling transcription factor ABI5 in seeds. The chain is Transcription factor MYB7 from Arabidopsis thaliana (Mouse-ear cress).